The following is a 370-amino-acid chain: Pyruvate dehydrogenase E1 component subunit alpha (370 aa).

Heterodimer of an alpha and a beta chain. The cofactor is thiamine diphosphate.

The catalysed reaction is N(6)-[(R)-lipoyl]-L-lysyl-[protein] + pyruvate + H(+) = N(6)-[(R)-S(8)-acetyldihydrolipoyl]-L-lysyl-[protein] + CO2. Functionally, the pyruvate dehydrogenase complex catalyzes the overall conversion of pyruvate to acetyl-CoA and CO(2). It contains multiple copies of three enzymatic components: pyruvate dehydrogenase (E1), dihydrolipoamide acetyltransferase (E2) and lipoamide dehydrogenase (E3). The polypeptide is Pyruvate dehydrogenase E1 component subunit alpha (pdhA) (Staphylococcus aureus (strain COL)).